A 377-amino-acid chain; its full sequence is Nitric oxide reductase FlRd-NAD(+) reductase (377 aa).

Belongs to the FAD-dependent oxidoreductase family. The cofactor is FAD.

The protein localises to the cytoplasm. The catalysed reaction is 2 reduced [nitric oxide reductase rubredoxin domain] + NAD(+) + H(+) = 2 oxidized [nitric oxide reductase rubredoxin domain] + NADH. The protein operates within nitrogen metabolism; nitric oxide reduction. In terms of biological role, one of at least two accessory proteins for anaerobic nitric oxide (NO) reductase. Reduces the rubredoxin moiety of NO reductase. The protein is Nitric oxide reductase FlRd-NAD(+) reductase of Salmonella paratyphi A (strain AKU_12601).